The primary structure comprises 337 residues: Ribosomal RNA small subunit methyltransferase H (337 aa).

S-adenosyl-L-methionine contacts are provided by residues 45 to 47, Asp-64, His-91, Asp-112, and Gln-119; that span reads GGH.

The protein belongs to the methyltransferase superfamily. RsmH family.

It is found in the cytoplasm. It catalyses the reaction cytidine(1402) in 16S rRNA + S-adenosyl-L-methionine = N(4)-methylcytidine(1402) in 16S rRNA + S-adenosyl-L-homocysteine + H(+). Its function is as follows. Specifically methylates the N4 position of cytidine in position 1402 (C1402) of 16S rRNA. In Cutibacterium acnes (strain DSM 16379 / KPA171202) (Propionibacterium acnes), this protein is Ribosomal RNA small subunit methyltransferase H.